A 237-amino-acid chain; its full sequence is Phosphoadenosine 5'-phosphosulfate reductase (237 aa).

Residue Cys-231 is the Nucleophile; cysteine thiosulfonate intermediate of the active site.

Belongs to the PAPS reductase family. CysH subfamily.

The protein localises to the cytoplasm. It catalyses the reaction [thioredoxin]-disulfide + sulfite + adenosine 3',5'-bisphosphate + 2 H(+) = [thioredoxin]-dithiol + 3'-phosphoadenylyl sulfate. It participates in sulfur metabolism; hydrogen sulfide biosynthesis; sulfite from sulfate: step 3/3. In terms of biological role, catalyzes the formation of sulfite from phosphoadenosine 5'-phosphosulfate (PAPS) using thioredoxin as an electron donor. In Xylella fastidiosa (strain 9a5c), this protein is Phosphoadenosine 5'-phosphosulfate reductase.